Consider the following 1084-residue polypeptide: Carbamoyl phosphate synthase large chain (1084 aa).

The interval methionine 1–glutamate 401 is carboxyphosphate synthetic domain. Arginine 129, arginine 169, glycine 175, glycine 176, arginine 208, leucine 210, glutamate 215, glycine 241, valine 242, histidine 243, glutamine 284, and glutamate 298 together coordinate ATP. Residues arginine 133–valine 327 form the ATP-grasp 1 domain. Glutamine 284, glutamate 298, and asparagine 300 together coordinate Mg(2+). Mn(2+) is bound by residues glutamine 284, glutamate 298, and asparagine 300. The interval threonine 402–alanine 546 is oligomerization domain. The tract at residues valine 547–glycine 947 is carbamoyl phosphate synthetic domain. The 191-residue stretch at aspartate 672–alanine 862 folds into the ATP-grasp 2 domain. Residues arginine 708, arginine 747, glutamate 753, glycine 778, valine 779, histidine 780, serine 781, glutamine 821, and glutamate 833 each coordinate ATP. Residues glutamine 821, glutamate 833, and asparagine 835 each coordinate Mg(2+). 3 residues coordinate Mn(2+): glutamine 821, glutamate 833, and asparagine 835. An MGS-like domain is found at valine 948–valine 1084. An allosteric domain region spans residues valine 948 to valine 1084.

This sequence belongs to the CarB family. As to quaternary structure, composed of two chains; the small (or glutamine) chain promotes the hydrolysis of glutamine to ammonia, which is used by the large (or ammonia) chain to synthesize carbamoyl phosphate. Tetramer of heterodimers (alpha,beta)4. It depends on Mg(2+) as a cofactor. Requires Mn(2+) as cofactor.

The catalysed reaction is hydrogencarbonate + L-glutamine + 2 ATP + H2O = carbamoyl phosphate + L-glutamate + 2 ADP + phosphate + 2 H(+). It carries out the reaction hydrogencarbonate + NH4(+) + 2 ATP = carbamoyl phosphate + 2 ADP + phosphate + 2 H(+). It participates in amino-acid biosynthesis; L-arginine biosynthesis; carbamoyl phosphate from bicarbonate: step 1/1. Its pathway is pyrimidine metabolism; UMP biosynthesis via de novo pathway; (S)-dihydroorotate from bicarbonate: step 1/3. Functionally, large subunit of the glutamine-dependent carbamoyl phosphate synthetase (CPSase). CPSase catalyzes the formation of carbamoyl phosphate from the ammonia moiety of glutamine, carbonate, and phosphate donated by ATP, constituting the first step of 2 biosynthetic pathways, one leading to arginine and/or urea and the other to pyrimidine nucleotides. The large subunit (synthetase) binds the substrates ammonia (free or transferred from glutamine from the small subunit), hydrogencarbonate and ATP and carries out an ATP-coupled ligase reaction, activating hydrogencarbonate by forming carboxy phosphate which reacts with ammonia to form carbamoyl phosphate. This Symbiobacterium thermophilum (strain DSM 24528 / JCM 14929 / IAM 14863 / T) protein is Carbamoyl phosphate synthase large chain.